The primary structure comprises 391 residues: F-box only protein 5 (391 aa).

An F-box domain is found at 198–245 (AELFHRDFKHLLTKILRHLSAMDLINVISVSTTWRKILQKDNSAYNSY). A ZBR-type zinc finger spans residues 318-366 (CLKVCVDCSSPAKYDPYLHRATCTRESCKFDFCTLCSCKYHGSKCCQTS). Zn(2+)-binding residues include cysteine 322, cysteine 325, cysteine 340, cysteine 345, cysteine 350, cysteine 353, histidine 358, and cysteine 363. Residues 365 to 391 (TSKPRSYRVPSEPLPGSKKSKQNLRRL) are disordered. Over residues 382–391 (KKSKQNLRRL) the composition is skewed to basic residues.

In terms of assembly, part of a SCF (SKP1-cullin-F-box) protein ligase complex. Interacts with btrc. Interacts with skp1. Interacts with cdc20. Interacts with pin1; stabilizes fbxo5 by preventing its association with btrc in an isomerization-dependent pathway; this interaction is present during G2 phase and prevents fbxo5 degradation. Interacts with plk1. Post-translationally, proteolysed; proteolysis is induced by both cyclin B-cdk1 and cyclin A-cdk1/2 complex through probable phosphorylation. Proteolysis is inhibited by pin1 during G2.

It is found in the nucleus. The protein localises to the cytoplasm. The protein resides in the cytoskeleton. It localises to the spindle. Its subcellular location is the microtubule organizing center. It is found in the centrosome. It functions in the pathway protein modification; protein ubiquitination. Regulates progression through early mitosis by inhibiting the anaphase promoting complex/cyclosome (APC). Binds to the APC activators cdc20 to prevent APC activation. Can also bind directly to the APC to inhibit substrate-binding. Required to arrest unfertilized eggs at metaphase of meiosis II, by preventing their release from metaphase of meiosis II, through inhibition of APC-dependent cyclin B destruction leading to stabilization of cyclin B-cdk1 complex activity. The polypeptide is F-box only protein 5 (Xenopus tropicalis (Western clawed frog)).